We begin with the raw amino-acid sequence, 165 residues long: Large ribosomal subunit protein uL10 (165 aa).

It belongs to the universal ribosomal protein uL10 family. Part of the ribosomal stalk of the 50S ribosomal subunit. The N-terminus interacts with L11 and the large rRNA to form the base of the stalk. The C-terminus forms an elongated spine to which L12 dimers bind in a sequential fashion forming a multimeric L10(L12)X complex.

Its function is as follows. Forms part of the ribosomal stalk, playing a central role in the interaction of the ribosome with GTP-bound translation factors. This chain is Large ribosomal subunit protein uL10, found in Deinococcus deserti (strain DSM 17065 / CIP 109153 / LMG 22923 / VCD115).